The chain runs to 325 residues: MEEERNSDEKENALCGRSLTAASRDGGGRMPAAPLAQGKVERGKVYSGDGVLGYLEMLEAQAHELGLKQEEKEQQEKKLDRLKARVQELRARRDELRAKVELQEKRLLDKEGVMTDPAQPSAQTVLEWKVKSLKAMLQVFYLTGISGKLTKQGVCFCISTAYEGTYLDSYYVDLLIKPLVKIQRHSVPVFIPLEQIAKKYLQTDIRRFLSVLSDHLNAYVGRRRQADQLEEHFSDHIDGTLQRNSLCNLLVFNYTVSSNSKTFPFNVRLLYGDLCCSLPTEAIISCTPGTLPLLAEMAAAHSNAFRHMALHKAFDSLINAKESQN.

Positions 1–35 (MEEERNSDEKENALCGRSLTAASRDGGGRMPAAPL) are disordered. Positions 55–112 (LEMLEAQAHELGLKQEEKEQQEKKLDRLKARVQELRARRDELRAKVELQEKRLLDKEG) form a coiled coil.

The protein belongs to the CENP-O/MCM21 family. Component of the CENPA-HI complex, at least composed of CENPH, CENPI, CENPK, CENPL, CENPM, CENPO and CENPP. Component of a discrete complex composed of at least CENPO, CENPP, CENPQ, CENPR and CENPU.

It localises to the nucleus. Its subcellular location is the chromosome. The protein resides in the centromere. Functionally, component of the CENPA-HI complex, a centromeric complex involved in assembly of kinetochore proteins, mitotic progression and chromosome segregation. Involved in kinetochore assembly and required for recovery from spindle damage. The sequence is that of Centromere protein O (CENPO) from Gallus gallus (Chicken).